An 801-amino-acid chain; its full sequence is Mitochondrial intermediate peptidase (801 aa).

A mitochondrion-targeting transit peptide spans 1 to 41 (MKDQLLVPLRRRPWTCQKCLQRLQLPRHQTRRSFETAASPF). Histidine 564 contributes to the Zn(2+) binding site. Residue glutamate 565 is part of the active site. Histidine 568 and histidine 571 together coordinate Zn(2+).

It belongs to the peptidase M3 family. Requires Zn(2+) as cofactor.

It is found in the mitochondrion matrix. The enzyme catalyses Release of an N-terminal octapeptide as second stage of processing of some proteins imported into the mitochondrion.. In terms of biological role, cleaves proteins, imported into the mitochondrion, to their mature size. While most mitochondrial precursor proteins are processed to the mature form in one step by mitochondrial processing peptidase (MPP), the sequential cleavage by MIP of an octapeptide after initial processing by MPP is a required step for a subgroup of nuclear-encoded precursor proteins destined for the matrix or the inner membrane. The sequence is that of Mitochondrial intermediate peptidase (oct1) from Aspergillus fumigatus (strain CBS 144.89 / FGSC A1163 / CEA10) (Neosartorya fumigata).